The chain runs to 379 residues: Cytochrome b (379 aa).

The next 4 membrane-spanning stretches (helical) occupy residues 34-54 (YGSL…MLAM), 78-100 (WMIR…VHIG), 113-133 (TWNI…LGYV), and 179-199 (FFSL…IHLL). Heme b contacts are provided by H84 and H98. 2 residues coordinate heme b: H183 and H197. Residue H202 coordinates a ubiquinone. A run of 4 helical transmembrane segments spans residues 225 to 245 (FSIK…FLVL), 289 to 309 (LGGV…PIFS), 320 to 340 (WSGM…WIGA), and 345 to 365 (APYI…FFWM).

This sequence belongs to the cytochrome b family. As to quaternary structure, the main subunits of complex b-c1 are: cytochrome b, cytochrome c1 and the Rieske protein. Heme b serves as cofactor.

The protein resides in the mitochondrion inner membrane. Functionally, component of the ubiquinol-cytochrome c reductase complex (complex III or cytochrome b-c1 complex) that is part of the mitochondrial respiratory chain. The b-c1 complex mediates electron transfer from ubiquinol to cytochrome c. Contributes to the generation of a proton gradient across the mitochondrial membrane that is then used for ATP synthesis. In Epiperipatus biolleyi (Velvet worm), this protein is Cytochrome b (mt:Cyt-b).